The following is a 383-amino-acid chain: Acetylornithine deacetylase (383 aa).

His-80 contacts Zn(2+). The active site involves Asp-82. Asp-112 is a Zn(2+) binding site. Residue Glu-144 is part of the active site. Residues Glu-145, Glu-169, and His-355 each contribute to the Zn(2+) site.

The protein belongs to the peptidase M20A family. ArgE subfamily. Homodimer. Zn(2+) serves as cofactor. The cofactor is Co(2+). It depends on glutathione as a cofactor.

The protein localises to the cytoplasm. It catalyses the reaction N(2)-acetyl-L-ornithine + H2O = L-ornithine + acetate. Its pathway is amino-acid biosynthesis; L-arginine biosynthesis; L-ornithine from N(2)-acetyl-L-ornithine (linear): step 1/1. Functionally, catalyzes the hydrolysis of the amide bond of N(2)-acetylated L-amino acids. Cleaves the acetyl group from N-acetyl-L-ornithine to form L-ornithine, an intermediate in L-arginine biosynthesis pathway, and a branchpoint in the synthesis of polyamines. The polypeptide is Acetylornithine deacetylase (Salmonella typhimurium (strain LT2 / SGSC1412 / ATCC 700720)).